We begin with the raw amino-acid sequence, 180 residues long: MSRIGKSPIVIPAGVTVEVKDGIITVKGKKGQLVQEFSDVNVTVEGDQVLVERSSDHKDHRAKHGLFRSLISNMVVGVSEGFTKELELVGVGYRASNQGQKLDLALGYSHNIVLEIAPEVSLETISEKGKNPIVKLTSFDKQLLGQVAAKIRGFRKPEPYKGKGVKFVGEVLRRKAGKSA.

It belongs to the universal ribosomal protein uL6 family. Part of the 50S ribosomal subunit.

This protein binds to the 23S rRNA, and is important in its secondary structure. It is located near the subunit interface in the base of the L7/L12 stalk, and near the tRNA binding site of the peptidyltransferase center. The polypeptide is Large ribosomal subunit protein uL6 (Flavobacterium johnsoniae (strain ATCC 17061 / DSM 2064 / JCM 8514 / BCRC 14874 / CCUG 350202 / NBRC 14942 / NCIMB 11054 / UW101) (Cytophaga johnsonae)).